A 489-amino-acid chain; its full sequence is Glycogen synthase (489 aa).

Position 15 (Lys-15) interacts with ADP-alpha-D-glucose.

The protein belongs to the glycosyltransferase 1 family. Bacterial/plant glycogen synthase subfamily.

It catalyses the reaction [(1-&gt;4)-alpha-D-glucosyl](n) + ADP-alpha-D-glucose = [(1-&gt;4)-alpha-D-glucosyl](n+1) + ADP + H(+). Its pathway is glycan biosynthesis; glycogen biosynthesis. Functionally, synthesizes alpha-1,4-glucan chains using ADP-glucose. This is Glycogen synthase from Francisella tularensis subsp. mediasiatica (strain FSC147).